A 388-amino-acid polypeptide reads, in one-letter code: Succinate--CoA ligase [ADP-forming] subunit beta (388 aa).

One can recognise an ATP-grasp domain in the interval 9-244 (KQLFAEFGLP…PSQEDKREAH (236 aa)). ATP is bound by residues Lys-46, 53–55 (GRG), Glu-99, Ser-102, and Glu-107. Residues Asn-199 and Asp-213 each contribute to the Mg(2+) site. Substrate-binding positions include Asn-264 and 321 to 323 (GIV).

The protein belongs to the succinate/malate CoA ligase beta subunit family. In terms of assembly, heterotetramer of two alpha and two beta subunits. The cofactor is Mg(2+).

It catalyses the reaction succinate + ATP + CoA = succinyl-CoA + ADP + phosphate. The catalysed reaction is GTP + succinate + CoA = succinyl-CoA + GDP + phosphate. It functions in the pathway carbohydrate metabolism; tricarboxylic acid cycle; succinate from succinyl-CoA (ligase route): step 1/1. Functionally, succinyl-CoA synthetase functions in the citric acid cycle (TCA), coupling the hydrolysis of succinyl-CoA to the synthesis of either ATP or GTP and thus represents the only step of substrate-level phosphorylation in the TCA. The beta subunit provides nucleotide specificity of the enzyme and binds the substrate succinate, while the binding sites for coenzyme A and phosphate are found in the alpha subunit. This is Succinate--CoA ligase [ADP-forming] subunit beta from Vibrio vulnificus (strain YJ016).